A 482-amino-acid chain; its full sequence is Mannan endo-1,4-beta-mannosidase (482 aa).

The first 21 residues, 1–21 (MARTLRYLLCGILALAAGSNA), serve as a signal peptide directing secretion. Positions 42-160 (TTYEAEDAIL…WYLVDSITLT (119 aa)) constitute a CBM6 domain. Residues Asn-171 and Asn-300 are each glycosylated (N-linked (GlcNAc...) asparagine). In terms of domain architecture, GH26 spans 181–474 (ASARALYDYL…YTSDYVLTLD (294 aa)). Glu-332 functions as the Proton donor in the catalytic mechanism. Residue Glu-422 is the Nucleophile of the active site.

The protein belongs to the glycosyl hydrolase 26 family.

Its subcellular location is the secreted. Its activity is regulated as follows. The activity is completely impaired by Ag(+), partially inhibited by Zn(2+), and enhanced by Co(2+), Ni(2+) and Cu(2+) by 22.6, 14.5 and 20.8 %, respectively. Ca(2+), Na(+), Mg(2+), Mn(2+), urea and EDTA do not significantly affect the mannanase activity. Its function is as follows. Mannan endo-1,4-beta-mannosidase that exhibits high activity against konjac glucomannan and carob galactomannan, as well as a lower activity toward beta-mannan. Shows no activity against barley beta-glucan, birchwood xylan, and low viscosity carboxymethyl cellulose (CMC). Has the ability to hydrolyze manno-oligosaccharides such as M4 which is degraded slightly to M3 and M1, M5 which is mainly degraded to M4 and M1, and M6 which is mostly hydrolyzed to M4 and M2. Shows no activity toward M2 and M3 manno-oligosaccharides. The polypeptide is Mannan endo-1,4-beta-mannosidase (Thermothelomyces thermophilus (strain ATCC 42464 / BCRC 31852 / DSM 1799) (Sporotrichum thermophile)).